Here is a 418-residue protein sequence, read N- to C-terminus: Tyrosine--tRNA ligase (418 aa).

Position 34 (Y34) interacts with L-tyrosine. Residues 39-48 (PTADSLHLGH) carry the 'HIGH' region motif. 2 residues coordinate L-tyrosine: Y169 and Q173. Residues 229-233 (KFGKS) carry the 'KMSKS' region motif. K232 serves as a coordination point for ATP. Residues 352-418 (LNIVDMLVTA…GKKKYAVLTY (67 aa)) enclose the S4 RNA-binding domain.

This sequence belongs to the class-I aminoacyl-tRNA synthetase family. TyrS type 1 subfamily. In terms of assembly, homodimer.

Its subcellular location is the cytoplasm. The enzyme catalyses tRNA(Tyr) + L-tyrosine + ATP = L-tyrosyl-tRNA(Tyr) + AMP + diphosphate + H(+). Catalyzes the attachment of tyrosine to tRNA(Tyr) in a two-step reaction: tyrosine is first activated by ATP to form Tyr-AMP and then transferred to the acceptor end of tRNA(Tyr). The polypeptide is Tyrosine--tRNA ligase (Streptococcus equi subsp. zooepidemicus (strain MGCS10565)).